The chain runs to 272 residues: Tail assembly protein Gp25 (272 aa).

The interval 219 to 272 (NRDPKKPKPKAPKSYPRPDDLEKTTPKPGSFAAMVVRAKKAARERREREEESAE) is disordered. Basic and acidic residues-rich tracts occupy residues 234–243 (PRPDDLEKTT) and 262–272 (ERREREEESAE).

It belongs to the L5likevirus tail assembly protein family. Interacts with tail assembly protein Gp24 and tape measure protein.

Functionally, promotes tail assembly by creating a scaffold for the tail tube proteins. The tail assembly proteins Gp24 and Gp25 would wrap the linear tape measure protein to create a tail assembly scaffold. It would allow polymerization of tail tube protein during which Gp24 and Gp25 are released and therefore are absent from the mature virion. The tail assembly protein Gp25 is produced by a rare -1 ribosomal frameshift. The ratio Gp24/Gp25 is important for proper tail assembly. The chain is Tail assembly protein Gp25 (25) from Mycobacterium phage L5 (Mycobacteriophage L5).